Consider the following 83-residue polypeptide: U5-theraphotoxin-Hs1a 6 (83 aa).

The N-terminal stretch at 1 to 21 (MKTSMFLTLTGLVLLFVVCYA) is a signal peptide. A propeptide spanning residues 22–49 (SESEEKEFPKELLSSIFAADSDFKVEER) is cleaved from the precursor. Disulfide bonds link cysteine 51/cysteine 63, cysteine 56/cysteine 68, and cysteine 62/cysteine 75.

This sequence belongs to the neurotoxin 10 (Hwtx-1) family. 51 (Hntx-8) subfamily. Hntx-8 sub-subfamily. As to expression, expressed by the venom gland.

It is found in the secreted. Agglutinates erythrocytes. This is U5-theraphotoxin-Hs1a 6 from Cyriopagopus schmidti (Chinese bird spider).